The sequence spans 106 residues: Ribonuclease P protein component 4 (106 aa).

Zn(2+) contacts are provided by Cys63, Cys66, Cys89, and Cys92.

Belongs to the eukaryotic/archaeal RNase P protein component 4 family. Consists of a catalytic RNA component and at least 4-5 protein subunits. It depends on Zn(2+) as a cofactor.

The protein resides in the cytoplasm. The enzyme catalyses Endonucleolytic cleavage of RNA, removing 5'-extranucleotides from tRNA precursor.. Its function is as follows. Part of ribonuclease P, a protein complex that generates mature tRNA molecules by cleaving their 5'-ends. The protein is Ribonuclease P protein component 4 of Methanosphaerula palustris (strain ATCC BAA-1556 / DSM 19958 / E1-9c).